The primary structure comprises 247 residues: Cell division protein ZapD (247 aa).

It belongs to the ZapD family. As to quaternary structure, interacts with FtsZ.

It localises to the cytoplasm. Functionally, cell division factor that enhances FtsZ-ring assembly. Directly interacts with FtsZ and promotes bundling of FtsZ protofilaments, with a reduction in FtsZ GTPase activity. The chain is Cell division protein ZapD from Shigella boydii serotype 4 (strain Sb227).